Reading from the N-terminus, the 188-residue chain is Large ribosomal subunit protein uL6 (188 aa).

Belongs to the universal ribosomal protein uL6 family.

In Tetrahymena thermophila (strain SB210), this protein is Large ribosomal subunit protein uL6 (RPL9).